The primary structure comprises 211 residues: Protein-L-isoaspartate O-methyltransferase (211 aa).

Serine 60 is a catalytic residue.

The protein belongs to the methyltransferase superfamily. L-isoaspartyl/D-aspartyl protein methyltransferase family.

It is found in the cytoplasm. The enzyme catalyses [protein]-L-isoaspartate + S-adenosyl-L-methionine = [protein]-L-isoaspartate alpha-methyl ester + S-adenosyl-L-homocysteine. Functionally, catalyzes the methyl esterification of L-isoaspartyl residues in peptides and proteins that result from spontaneous decomposition of normal L-aspartyl and L-asparaginyl residues. It plays a role in the repair and/or degradation of damaged proteins. The sequence is that of Protein-L-isoaspartate O-methyltransferase from Pseudomonas aeruginosa (strain LESB58).